The chain runs to 151 residues: MKVWVDADACPGVIKEILFRVADRAKVEVTLVANHWMRIPPSPYINLKTVSSGFDVADDEIVKLLSAGDLVITADIPLASEVIDKGGFALNPRGELYTEQNIKSILNMRDFMDTMRASGVQTGGPAAIGASEKQAFGNQLDRFITKNHKPS.

This sequence belongs to the UPF0178 family.

This chain is UPF0178 protein Spea_2958, found in Shewanella pealeana (strain ATCC 700345 / ANG-SQ1).